Here is a 275-residue protein sequence, read N- to C-terminus: Large ribosomal subunit protein uL2 (275 aa).

Positions 38 to 53 are enriched in polar residues; it reads NSKAGRNNNGRITTRH. 2 disordered regions span residues 38–59 and 224–257; these read NSKAGRNNNGRITTRHQGGGHK and AMNPIDHPHGGGEGRTAAGRDPVSPWGTPTKGFR.

Belongs to the universal ribosomal protein uL2 family. Part of the 50S ribosomal subunit. Forms a bridge to the 30S subunit in the 70S ribosome.

One of the primary rRNA binding proteins. Required for association of the 30S and 50S subunits to form the 70S ribosome, for tRNA binding and peptide bond formation. It has been suggested to have peptidyltransferase activity; this is somewhat controversial. Makes several contacts with the 16S rRNA in the 70S ribosome. This Burkholderia thailandensis (strain ATCC 700388 / DSM 13276 / CCUG 48851 / CIP 106301 / E264) protein is Large ribosomal subunit protein uL2.